We begin with the raw amino-acid sequence, 61 residues long: Small ribosomal subunit protein uS14B (61 aa).

Residues cysteine 24, cysteine 27, cysteine 40, and cysteine 43 each coordinate Zn(2+).

The protein belongs to the universal ribosomal protein uS14 family. Zinc-binding uS14 subfamily. In terms of assembly, part of the 30S ribosomal subunit. Contacts proteins S3 and S10. It depends on Zn(2+) as a cofactor.

Binds 16S rRNA, required for the assembly of 30S particles and may also be responsible for determining the conformation of the 16S rRNA at the A site. The polypeptide is Small ribosomal subunit protein uS14B (Cutibacterium acnes (strain DSM 16379 / KPA171202) (Propionibacterium acnes)).